A 565-amino-acid polypeptide reads, in one-letter code: MKSPAPSRPQKMALIPACIFLCFAALSVQAEETSVTPQPPDILLGPLFNDVQNAKLFPDQKTFAGAVPNSDPLMILADYRMQQNQSGFDLRHFVNVNFTLPKEGEKYVPPEGQSLREHIDGLWPILTRSTENTEKWDSLLPLPEPYVVPGGRFREVYYWDSYFTMLGLAESGHWDKVADMVANFAHEIDTYGHIPNGNRSYYLSRSQPPFFALMVELLAQHEGDAALKQYLPQMQKEYAYWMDGVENLQAGQQEKRVVKLQDGTLLNRYWDDRDTPRPESWVEDIATAKSNPNRPATEIYRDLRSAAASGWDFSSRWMDNPQQLNTLRTTSIVPVDLNSLMFKMEKILARASKAAGDNAMANQYETLANARQKGIEKYLWNDQQGWYADYDLKSHKVRNQLTAAALFPLYVNAAAKDRANKMATATKTHLLQPGGLNTTSVKSGQQWDAPNGWAPLQWVATEGLQNYGQKEVAMDISWHFLTNVQHTYDREKKLVEKYDVSTTGTGGGGGEYPLQDGFGWTNGVTLKMLDLICPKEQPCDNVPATRPLSESTTQPVKPKEAEPTL.

An N-terminal signal peptide occupies residues 1 to 30; that stretch reads MKSPAPSRPQKMALIPACIFLCFAALSVQA. Substrate-binding positions include Arg152, 159–160, Asn196, 205–207, 277–279, and Gly310; these read WD, RSQ, and RPE. Residues Asp312 and Glu496 each act as proton donor/acceptor in the active site. Glu511 serves as a coordination point for substrate. The tract at residues 539 to 565 is disordered; it reads CDNVPATRPLSESTTQPVKPKEAEPTL.

This sequence belongs to the glycosyl hydrolase 37 family. In terms of assembly, monomer.

The protein localises to the periplasm. It catalyses the reaction alpha,alpha-trehalose + H2O = alpha-D-glucose + beta-D-glucose. In terms of biological role, provides the cells with the ability to utilize trehalose at high osmolarity by splitting it into glucose molecules that can subsequently be taken up by the phosphotransferase-mediated uptake system. This chain is Periplasmic trehalase, found in Shigella dysenteriae serotype 1 (strain Sd197).